Here is a 287-residue protein sequence, read N- to C-terminus: Nucleoid occlusion protein (287 aa).

The segment at residues 146-165 (EALAQRVGKSQSAIANKMRL) is a DNA-binding region (H-T-H motif).

This sequence belongs to the ParB family.

It localises to the cytoplasm. It is found in the nucleoid. Effects nucleoid occlusion by binding relatively nonspecifically to DNA and preventing the assembly of the division machinery in the vicinity of the nucleoid, especially under conditions that disturb the cell cycle. It helps to coordinate cell division and chromosome segregation by preventing the formation of the Z ring through the nucleoid, which would cause chromosome breakage. The chain is Nucleoid occlusion protein from Listeria monocytogenes serotype 4a (strain HCC23).